Reading from the N-terminus, the 57-residue chain is Putative secreted protein MT0250 (57 aa).

The N-terminal stretch at 1–32 (MNRIVAPAAASVVVGLLLGAAAIFGVTLMVQQ) is a signal peptide. Residues 34 to 57 (KKPPLPGGDPSSSVLNRVEYGNRS) form a disordered region.

This chain is Putative secreted protein MT0250, found in Mycobacterium tuberculosis (strain CDC 1551 / Oshkosh).